A 685-amino-acid chain; its full sequence is MLVLQRIPKRALQFNGVTGTVCSTRLFHHAFNLNLQQSFVPSEERRYRNSNRGFTRGSDSNSNNKYRNSSYDDNRSRSNYGGDKRNNRNNNNYGNNRNNGSRRRYQDENSDIEVFKSKSFNVTTLNPESFHEQVTIDSLLEESLLDANVHKAISAMKFESLTPVQQRTIKPILTTENDVVAKAKTGTGKTLAFLAPLFQHLISTKLQNPLAVKAVIVTPTRDLAIQIASEVKKLQQCNPSLKSYRSLTLIGGTNLDKSLKDLHTLNPNIIVGTPGRINDILDRVGAKYFKDVDFKVLDEADTLLQIGFQTELSLISRKLNEFNTQGEEHIRTLLFSATMDHNVQELAATIMNKKDCLFIDTVDKNDSEAHDSIDQKLVITKSFAESMVALIQSIESELLQKKNFKAILFLPTVKFVDFFSETLSESLTKRIDIIKFHGKIDQKKRTKLVDRFKKTNHGIFVCTDVGARGMHFPSVEHVYQLCVPTSLPNYIHRIGRTARAGESGAATIFLFREELKFVDELRRDTNVVIKNQEDYLNQDKENFDMISSIITNNPDFPEALKSIIGFYKGVQNEYRLNYKVAQNVLRSFSELHSDSSMLLRFRPSEINNFFSNRDMRFVSDLIDVKNPHSFGKDREFDDEDRYTSRSQNNYKSKQSSKSNRFEGRNDYSNSRRSHANQKRNFTFDD.

Residues 1–34 (MLVLQRIPKRALQFNGVTGTVCSTRLFHHAFNLN) constitute a mitochondrion transit peptide. The tract at residues 42–107 (SEERRYRNSN…NNGSRRRYQD (66 aa)) is disordered. Residues 58–69 (SDSNSNNKYRNS) show a composition bias toward low complexity. Residues 70-86 (SYDDNRSRSNYGGDKRN) are compositionally biased toward basic and acidic residues. Over residues 88–99 (RNNNNYGNNRNN) the composition is skewed to low complexity. The short motif at 138-166 (SLLEESLLDANVHKAISAMKFESLTPVQQ) is the Q motif element. The Helicase ATP-binding domain occupies 170-357 (KPILTTENDV…ATIMNKKDCL (188 aa)). ATP is bound at residue 183 to 190 (AKTGTGKT). Positions 298–301 (DEAD) match the DEAD box motif. Positions 386–542 (SMVALIQSIE…EDYLNQDKEN (157 aa)) constitute a Helicase C-terminal domain. Residues 633 to 685 (DREFDDEDRYTSRSQNNYKSKQSSKSNRFEGRNDYSNSRRSHANQKRNFTFDD) form a disordered region. Residues 644–658 (SRSQNNYKSKQSSKS) are compositionally biased toward low complexity.

The protein belongs to the DEAD box helicase family. DDX18/HAS1 subfamily.

The protein resides in the mitochondrion matrix. The catalysed reaction is ATP + H2O = ADP + phosphate + H(+). Functionally, ATP-dependent RNA helicase required for mitochondrial splicing of group I and II introns. Also required for efficient mitochondrial translation. This is ATP-dependent RNA helicase MSS116, mitochondrial (MSS116) from Kluyveromyces lactis (strain ATCC 8585 / CBS 2359 / DSM 70799 / NBRC 1267 / NRRL Y-1140 / WM37) (Yeast).